The primary structure comprises 349 residues: MAIPITVLDCDLLLYGRGHRTLDRFKLDDVTDEYLMSMYGFPRQFIYYLVELLGANLSRPTQRSRAISPETQVLAALGFYTSGSFQTRMGDAIGISQASMSRCVANVTEALVERASQFIRFPADEASIQALKDEFYGLAGMPGVMGVVDCIHVAIKAPNAEDLSYVNRKGLHSLNCLMVCDIRGTLMTVETNWPGSLQDCAVLQQSSLSSQFEAGMHKDSWLLGDSSFFLRTWLMTPLHIPETPAEYRYNMAHSATHSVIEKTFRTLCSRFRCLDGSKGALQYSPEKSSHIILACCVLHNISLEHGMDVWSSPMTGPMEQPPEEEYEHMESLDLEADRIRQELMLTHFS.

One can recognise a DDE Tnp4 domain in the interval 148-300; it reads VDCIHVAIKA…IILACCVLHN (153 aa). A divalent metal cation-binding residues include Asp-149, Asp-199, Asp-225, and Glu-261.

It belongs to the HARBI1 family. In terms of assembly, interacts with NAIF1. The cofactor is a divalent metal cation. Detected in brain, eye, nerve tissue, kidney and lung.

Its subcellular location is the nucleus. The protein resides in the cytoplasm. In terms of biological role, transposase-derived protein that may have nuclease activity (Potential). Does not have transposase activity. This is Putative nuclease HARBI1 (HARBI1) from Homo sapiens (Human).